We begin with the raw amino-acid sequence, 76 residues long: Dermaseptin-B4 (76 aa).

An N-terminal signal peptide occupies residues 1–22 (MAFLKKSLFLVLFLGLVSLSIC). A propeptide spanning residues 23-43 (EEEKRENKDEIEQEDDEQSEE) is cleaved from the precursor. Gln-73 carries the glutamine amide modification. The propeptide occupies 75-76 (EQ).

The protein belongs to the frog skin active peptide (FSAP) family. Dermaseptin subfamily. In terms of tissue distribution, expressed by the skin glands.

The protein resides in the secreted. Potent antimicrobial peptide with potent activity against Gram-positive and Gram-negative bacteria. Probably acts by disturbing membrane functions with its amphipathic structure. Has an activity of stimulation of insulin release, which may protect the species from being eaten by predators by causing fatal hypoglycemia. Has hemolytic activity. The sequence is that of Dermaseptin-B4 from Phyllomedusa bicolor (Two-colored leaf frog).